Here is a 59-residue protein sequence, read N- to C-terminus: Large ribosomal subunit protein uL30 (59 aa).

This sequence belongs to the universal ribosomal protein uL30 family. Part of the 50S ribosomal subunit.

This chain is Large ribosomal subunit protein uL30, found in Shewanella amazonensis (strain ATCC BAA-1098 / SB2B).